The following is an 850-amino-acid chain: Endoribonuclease ysh-1 (850 aa).

Zn(2+) is bound by residues H83, H85, D87, H88, H173, and D194. The Proton donor role is filled by H442. H464 lines the Zn(2+) pocket. 2 disordered regions span residues 685-708 (VKRS…PHSH) and 732-784 (SPIV…EQQL). Polar residues predominate over residues 744 to 754 (PTTKAITSPSE). Over residues 755–766 (ETAKSSDVKSDA) the composition is skewed to basic and acidic residues. A compositionally biased stretch (acidic residues) spans 767–781 (DADASMDVSEEDEDE).

This sequence belongs to the metallo-beta-lactamase superfamily. RNA-metabolizing metallo-beta-lactamase-like family. CPSF2/YSH1 subfamily.

The protein resides in the nucleus. In terms of biological role, component of the cleavage factor I (CF I) involved in pre-mRNA 3'-end processing. The chain is Endoribonuclease ysh-1 (ysh-1) from Neurospora crassa (strain ATCC 24698 / 74-OR23-1A / CBS 708.71 / DSM 1257 / FGSC 987).